A 215-amino-acid polypeptide reads, in one-letter code: FGFR1 oncogene partner 2 homolog (215 aa).

Residues 12-186 (AKELVERLRE…REILQITKIS (175 aa)) are a coiled coil. Residues 193–215 (EDASENSPHSAPVPNTDLILRKS) form a disordered region.

It belongs to the SIKE family.

It localises to the cytoplasm. This chain is FGFR1 oncogene partner 2 homolog (fgfr1op2), found in Xenopus laevis (African clawed frog).